The sequence spans 732 residues: Anthranilate synthase (732 aa).

The region spanning 533–728 is the Glutamine amidotransferase type-1 domain; sequence RVLLVDHDDS…MDRLAAGALT (196 aa). 583–585 is a binding site for L-glutamine; the sequence is GPG. The active-site Nucleophile; for GATase activity is the Cys610. L-glutamine contacts are provided by residues Gln614 and 660 to 661; that span reads SL. Active-site for GATase activity residues include His699 and Glu701.

The catalysed reaction is chorismate + L-glutamine = anthranilate + pyruvate + L-glutamate + H(+). The protein operates within amino-acid biosynthesis; L-tryptophan biosynthesis; L-tryptophan from chorismate: step 1/5. The sequence is that of Anthranilate synthase (trpE(G)) from Azospirillum brasilense.